A 981-amino-acid chain; its full sequence is Protein deadlock (981 aa).

A required for interaction with rhi/rhino region spans residues 1-60; that stretch reads MEKLDKIRMSQKLSCWQHILTTLGTSSKTEQEWNTFFKGFLESWRKPYCIQTSCDPSIPL. Disordered regions lie at residues 72 to 195, 274 to 307, 327 to 352, 375 to 446, 554 to 586, and 642 to 662; these read LQEN…ACAP, IMDKPKNKQQPQTPPPFLLNNEYTESSDDSDDQL, SRNEDCSPAPEKVKLKGERPAQNKKE, LRKS…PNNI, GLDDENVPEDEPRKEAKTAEQLPKPEPSTETLK, and LVHQPLAESNRNQRDEATAAR. 2 stretches are compositionally biased toward polar residues: residues 104 to 113 and 150 to 160; these read PSKSHSTGST and NHTTSIFSKAQ. A compositionally biased stretch (basic and acidic residues) spans 167–191; it reads KLSSTKKRPDTCAPTDDSRKNREPR. The span at 337–352 shows a compositional bias: basic and acidic residues; sequence EKVKLKGERPAQNKKE. Over residues 377-390 the composition is skewed to basic residues; that stretch reads KSVKKSAKQQKPRV. A compositionally biased stretch (basic and acidic residues) spans 409–419; sequence TQDKQSTHEMI. The span at 422–446 shows a compositional bias: polar residues; sequence QAKTISEASGQQTSQVQSSLSPNNI. Positions 652 to 662 are enriched in basic and acidic residues; that stretch reads RNQRDEATAAR.

As to quaternary structure, component of the Rhino-Deadlock-Cutoff (RDC) complex, composed of rhi/rhino, del/deadlock and cuff/cutoff. Interacts (via N-terminus) with rhi/rhino (via C-terminus); this interaction is direct. Interacts (via C-terminus) with cuff/cutoff; this interaction is direct.

Its subcellular location is the nucleus. It localises to the cytoplasm. It is found in the cytoskeleton. The protein localises to the microtubule organizing center. The protein resides in the centrosome. Its subcellular location is the chromosome. Developmental protein involved in oogenesis. Required for germline maintenance, stability of mitotic spindles, localization of patterning determinants, oocyte growth and fusome biogenesis in males and females. Also required for dorso-ventral and antero-posterior patterning of oocyte and eggshell. May be involved in microtubule function during oogenesis. Part of a rhi-dependent transcription machinery that enables the generation of piRNA precursors from heterochromatin while maintaining the suppression of transposon-encoded promoters and enhancers. Component of the RDC complex (rhi, del and cuff) which binds to repressive H3K9me3 marks in the piRNA clusters. RDC promotes the bidirectional transcription of piRNA clusters at these sites by interacting with Moonshiner which forms a complex with the transcription initiation factors TfIIA-S and Trf2. This mechanism allows transcription to occur in piRNA clusters despite the lack of proper promoter elements and in the presence of the repressive H3K9me3 mark. As part of the RDC complex, involved in suppression of splicing. This is Protein deadlock (del) from Drosophila melanogaster (Fruit fly).